Here is a 139-residue protein sequence, read N- to C-terminus: Nucleoside diphosphate kinase (139 aa).

Lys-12, Phe-60, Arg-88, Thr-94, Arg-105, and Asn-115 together coordinate ATP. His-118 (pros-phosphohistidine intermediate) is an active-site residue.

Belongs to the NDK family. Homotetramer. It depends on Mg(2+) as a cofactor.

It localises to the cytoplasm. The catalysed reaction is a 2'-deoxyribonucleoside 5'-diphosphate + ATP = a 2'-deoxyribonucleoside 5'-triphosphate + ADP. It catalyses the reaction a ribonucleoside 5'-diphosphate + ATP = a ribonucleoside 5'-triphosphate + ADP. Major role in the synthesis of nucleoside triphosphates other than ATP. The ATP gamma phosphate is transferred to the NDP beta phosphate via a ping-pong mechanism, using a phosphorylated active-site intermediate. The polypeptide is Nucleoside diphosphate kinase (Caldanaerobacter subterraneus subsp. tengcongensis (strain DSM 15242 / JCM 11007 / NBRC 100824 / MB4) (Thermoanaerobacter tengcongensis)).